Reading from the N-terminus, the 98-residue chain is Integration host factor subunit beta (98 aa).

Belongs to the bacterial histone-like protein family. In terms of assembly, heterodimer of an alpha and a beta chain.

Its function is as follows. This protein is one of the two subunits of integration host factor, a specific DNA-binding protein that functions in genetic recombination as well as in transcriptional and translational control. In Pseudomonas fluorescens (strain Pf0-1), this protein is Integration host factor subunit beta.